The following is a 558-amino-acid chain: Tektin-5 (558 aa).

Positions 347-381 (ISEETDVKNKLQTQLAKILQEIFQAENTIMLLERA) form a coiled coil.

It belongs to the tektin family. In terms of assembly, microtubule inner protein component of sperm flagellar doublet microtubules. Interacts with TEKT3. Post-translationally, ubiquitinated, leading to its degradation. Deubiquitinated by USP16, promoting its stability. In terms of tissue distribution, specifically expressed in testis.

It localises to the cytoplasm. The protein localises to the cytoskeleton. It is found in the flagellum axoneme. Sperm-specific microtubule inner protein (MIP) part of the dynein-decorated doublet microtubules (DMTs) in flagellar axoneme. Forms an extensive interaction network in different conformations that reinforces the helix bundle composed by other tektin proteins (TEKT1 to TEKT4) and MIPs to anchor the tektin bundle onto the tubulin wall of A-tubule of the sperm flagellum. This is Tektin-5 from Rattus norvegicus (Rat).